The chain runs to 312 residues: Very-long-chain 3-oxoacyl-CoA reductase (312 aa).

The chain crosses the membrane as a helical span at residues A4–L24. G50 to L79 contacts NADP(+). 2 helical membrane passes run G182–Y202 and G271–L291. S189 is a binding site for substrate. Residue Y202 is the Proton acceptor of the active site. Positions K308–N312 match the Di-lysine motif motif.

It belongs to the short-chain dehydrogenases/reductases (SDR) family. 17-beta-HSD 3 subfamily.

Its subcellular location is the endoplasmic reticulum membrane. It catalyses the reaction a very-long-chain (3R)-3-hydroxyacyl-CoA + NADP(+) = a very-long-chain 3-oxoacyl-CoA + NADPH + H(+). It carries out the reaction 17beta-estradiol + NAD(+) = estrone + NADH + H(+). The catalysed reaction is 17beta-estradiol + NADP(+) = estrone + NADPH + H(+). The enzyme catalyses 3-oxooctadecanoyl-CoA + NADPH + H(+) = (3R)-hydroxyoctadecanoyl-CoA + NADP(+). It catalyses the reaction (7Z,10Z,13Z,16Z)-3-oxodocosatetraenoyl-CoA + NADPH + H(+) = (3R)-hydroxy-(7Z,10Z,13Z,16Z)-docosatetraenoyl-CoA + NADP(+). It carries out the reaction 3-oxo-(7Z,10Z,13Z,16Z,19Z)-docosapentaenoyl-CoA + NADPH + H(+) = (3R)-hydroxy-(7Z,10Z,13Z,16Z,19Z)-docosapentaenoyl-CoA + NADP(+). The catalysed reaction is (8Z,11Z,14Z)-3-oxoeicosatrienoyl-CoA + NADPH + H(+) = (3R)-hydroxy-(8Z,11Z,14Z)-eicosatrienoyl-CoA + NADP(+). It participates in lipid metabolism; fatty acid biosynthesis. Its pathway is steroid biosynthesis; estrogen biosynthesis. Functionally, catalyzes the second of the four reactions of the long-chain fatty acids elongation cycle. This endoplasmic reticulum-bound enzymatic process, allows the addition of two carbons to the chain of long- and very long-chain fatty acids/VLCFAs per cycle. This enzyme has a 3-ketoacyl-CoA reductase activity, reducing 3-ketoacyl-CoA to 3-hydroxyacyl-CoA, within each cycle of fatty acid elongation. Thereby, it may participate in the production of VLCFAs of different chain lengths that are involved in multiple biological processes as precursors of membrane lipids and lipid mediators. May also catalyze the transformation of estrone (E1) into estradiol (E2) and play a role in estrogen formation. In Macaca fascicularis (Crab-eating macaque), this protein is Very-long-chain 3-oxoacyl-CoA reductase (HSD17B12).